We begin with the raw amino-acid sequence, 141 residues long: Large ribosomal subunit protein uL11 (141 aa).

It belongs to the universal ribosomal protein uL11 family. Part of the ribosomal stalk of the 50S ribosomal subunit. Interacts with L10 and the large rRNA to form the base of the stalk. L10 forms an elongated spine to which L12 dimers bind in a sequential fashion forming a multimeric L10(L12)X complex. In terms of processing, one or more lysine residues are methylated.

Its function is as follows. Forms part of the ribosomal stalk which helps the ribosome interact with GTP-bound translation factors. In Streptococcus agalactiae serotype III (strain NEM316), this protein is Large ribosomal subunit protein uL11.